The chain runs to 258 residues: Regulatory protein RecX (258 aa).

Belongs to the RecX family.

It localises to the cytoplasm. Modulates RecA activity. This is Regulatory protein RecX from Streptococcus pyogenes serotype M5 (strain Manfredo).